Consider the following 353-residue polypeptide: Beta-hexosaminidase (353 aa).

Substrate-binding positions include Asp-74, Arg-82, Arg-149, and 179–180 (KH). Residue His-192 is the Proton donor/acceptor of the active site. The active-site Nucleophile is Asp-263.

The protein belongs to the glycosyl hydrolase 3 family. NagZ subfamily.

The protein resides in the cytoplasm. The catalysed reaction is Hydrolysis of terminal non-reducing N-acetyl-D-hexosamine residues in N-acetyl-beta-D-hexosaminides.. Its pathway is cell wall biogenesis; peptidoglycan recycling. In terms of biological role, plays a role in peptidoglycan recycling by cleaving the terminal beta-1,4-linked N-acetylglucosamine (GlcNAc) from peptide-linked peptidoglycan fragments, giving rise to free GlcNAc, anhydro-N-acetylmuramic acid and anhydro-N-acetylmuramic acid-linked peptides. In Bordetella bronchiseptica (strain ATCC BAA-588 / NCTC 13252 / RB50) (Alcaligenes bronchisepticus), this protein is Beta-hexosaminidase.